A 215-amino-acid polypeptide reads, in one-letter code: Elongation factor Ts (215 aa).

Positions 80 to 83 (TDFV) are involved in Mg(2+) ion dislocation from EF-Tu.

It belongs to the EF-Ts family.

It localises to the cytoplasm. Associates with the EF-Tu.GDP complex and induces the exchange of GDP to GTP. It remains bound to the aminoacyl-tRNA.EF-Tu.GTP complex up to the GTP hydrolysis stage on the ribosome. The chain is Elongation factor Ts from Heliobacterium modesticaldum (strain ATCC 51547 / Ice1).